Consider the following 162-residue polypeptide: Glycine cleavage system H protein, mitochondrial (162 aa).

The transit peptide at 1–31 (MALRMWASSTANALRLSSATRPHFSPLSRCF) directs the protein to the mitochondrion. Positions 53-135 (VATIGITDHA…YEDGWMIKVK (83 aa)) constitute a Lipoyl-binding domain. K94 bears the N6-lipoyllysine mark.

The protein belongs to the GcvH family. The glycine cleavage system is composed of four proteins: P, T, L and H. It depends on (R)-lipoate as a cofactor.

It is found in the mitochondrion. In terms of biological role, the glycine cleavage system catalyzes the degradation of glycine. The H protein shuttles the methylamine group of glycine from the P protein to the T protein. This Flaveria anomala (Yellowtops) protein is Glycine cleavage system H protein, mitochondrial (GDCSH).